The chain runs to 322 residues: Gluconeogenesis factor (322 aa).

The protein belongs to the gluconeogenesis factor family.

Its subcellular location is the cytoplasm. In terms of biological role, required for morphogenesis under gluconeogenic growth conditions. The chain is Gluconeogenesis factor from Listeria monocytogenes serovar 1/2a (strain ATCC BAA-679 / EGD-e).